Consider the following 301-residue polypeptide: Sulfate adenylyltransferase subunit 2 1 (301 aa).

It belongs to the PAPS reductase family. CysD subfamily. As to quaternary structure, heterodimer composed of CysD, the smaller subunit, and CysN.

The enzyme catalyses sulfate + ATP + H(+) = adenosine 5'-phosphosulfate + diphosphate. It participates in sulfur metabolism; hydrogen sulfide biosynthesis; sulfite from sulfate: step 1/3. In terms of biological role, with CysN forms the ATP sulfurylase (ATPS) that catalyzes the adenylation of sulfate producing adenosine 5'-phosphosulfate (APS) and diphosphate, the first enzymatic step in sulfur assimilation pathway. APS synthesis involves the formation of a high-energy phosphoric-sulfuric acid anhydride bond driven by GTP hydrolysis by CysN coupled to ATP hydrolysis by CysD. In Shewanella sediminis (strain HAW-EB3), this protein is Sulfate adenylyltransferase subunit 2 1.